The sequence spans 101 residues: Small ubiquitin-related modifier 5 (101 aa).

The short motif at 17 to 21 (IKDED) is the Required for PML-NB formation element. Lys18 is covalently cross-linked (Glycyl lysine isopeptide (Lys-Gly) (interchain with G-Cter in SUMO1P1/SUMO5)). Residues 20 to 97 (EDIKLRVIGQ…IEVYQEQIGG (78 aa)) enclose the Ubiquitin-like domain. Residue Gly97 forms a Glycyl lysine isopeptide (Gly-Lys) (interchain with K-? in acceptor proteins) linkage. The propeptide occupies 98–101 (HSTV).

This sequence belongs to the ubiquitin family. SUMO subfamily. In terms of assembly, interacts with CBX4. Interacts with PIAS1. Found in a complex with SAE2. Interacts with UBE2I. Interacts with SP100. Interacts with HIPK2. Interacts with DAXX. Interacts with PML-RARA oncoprotein; PML-RARalpha outcompetes PML for SUMO1P1/SUMO5 conjugation. In terms of processing, cleavage of precursor form is necessary for function. Post-translationally, autosumoylated at Lys-18. High expression levels in testes and peripheral blood leukocyte. Expressed also in lung, placenta, liver, spleen and thymus.

Its subcellular location is the nucleus. In terms of biological role, ubiquitin-like protein that can be covalently attached to proteins as a monomer or as a lysine-linked polymer. Regulates the life cycle of promyelocytic leukemia nuclear bodies (PML-NBs). PolySUMO1P1/SUMO5 conjugation on 'Lys-160' of PML facilitates recruitment of PML-NB components, which enlarges PML-NB. SUMO1P1/SUMO5 also increases polySUMO2/3 conjugation of PML, resulting in RNF4-mediated disruption of PML-NBs. The polypeptide is Small ubiquitin-related modifier 5 (Homo sapiens (Human)).